Reading from the N-terminus, the 214-residue chain is High frequency lysogenization protein HflD homolog (214 aa).

Belongs to the HflD family.

The protein localises to the cytoplasm. The protein resides in the cell inner membrane. This is High frequency lysogenization protein HflD homolog from Chromohalobacter salexigens (strain ATCC BAA-138 / DSM 3043 / CIP 106854 / NCIMB 13768 / 1H11).